Reading from the N-terminus, the 115-residue chain is Large ribosomal subunit protein uL18 (115 aa).

The protein belongs to the universal ribosomal protein uL18 family. In terms of assembly, part of the 50S ribosomal subunit; part of the 5S rRNA/L5/L18/L25 subcomplex. Contacts the 5S and 23S rRNAs.

This is one of the proteins that bind and probably mediate the attachment of the 5S RNA into the large ribosomal subunit, where it forms part of the central protuberance. The chain is Large ribosomal subunit protein uL18 from Mycoplasma genitalium (strain ATCC 33530 / DSM 19775 / NCTC 10195 / G37) (Mycoplasmoides genitalium).